We begin with the raw amino-acid sequence, 211 residues long: Protein U63 (211 aa).

This sequence belongs to the herpesviridae UL92 family.

This Human herpesvirus 7 (strain JI) (HHV-7) protein is Protein U63 (U63).